The sequence spans 1790 residues: Atrochrysone carboxylic acid synthase (1790 aa).

Residues 27–265 (RDLQDLFRQA…ALPVYGGLCH (239 aa)) are N-terminal acylcarrier protein transacylase domain (SAT). In terms of domain architecture, Ketosynthase family 3 (KS3) spans 399–833 (QSKLAIVGMS…GGNTTMILED (435 aa)). Active-site for beta-ketoacyl synthase activity residues include C572, H708, and H751. Residues 934–1254 (FSFTGQGASH…IAQLYTVGVD (321 aa)) are malonyl-CoA:ACP transacylase (MAT) domain. Positions 1323-1475 (QQIVEQVFDT…SLTHLVRDRI (153 aa)) are N-terminal hotdog fold. The PKS/mFAS DH domain maps to 1323-1634 (QQIVEQVFDT…FHRYRRILLE (312 aa)). Catalysis depends on H1357, which acts as the Proton acceptor; for dehydratase activity. The segment at 1357–1631 (HRMNDCGVAT…GIEFHRYRRI (275 aa)) is product template (PT) domain. Residues 1487-1634 (ANRLSHNMAY…FHRYRRILLE (148 aa)) form a C-terminal hotdog fold region. D1545 (proton donor; for dehydratase activity) is an active-site residue. The disordered stretch occupies residues 1644–1667 (NLDDTTETKDISSSTQHSVPVSRQ). Residues 1654–1664 (ISSSTQHSVPV) are compositionally biased toward polar residues. The Carrier domain maps to 1715 to 1789 (SSITNRAMQL…DLRNWLEETY (75 aa)). O-(pantetheine 4'-phosphoryl)serine is present on S1749.

It carries out the reaction holo-[ACP] + 8 malonyl-CoA + 8 H(+) = atrochrysone carboxyl-[ACP] + 8 CO2 + 8 CoA + 2 H2O. It participates in pigment biosynthesis. Functionally, non-reducing polyketide synthase; part of the gene cluster that mediates the biosynthesis of the bianthraquinone cladofulvin, a conidial pigment not required for virulence but that plays a role in fitness and resistance to environmental stresses including UV light and low-temperature stress. The pathway begins with the synthesis of atrochrysone thioester by the polyketide synthase (PKS) claG. The atrochrysone carboxyl ACP thioesterase claF then breaks the thioester bond and releases the atrochrysone carboxylic acid from claG. This compound is decarboxylated by claH to yield emodin, which is further converted to chrysophanol hydroquinone by the reductase claC and the dehydratase claB. The cytochrome P450 monooxygenase claM then catalyzes the dimerization of nataloe-emodin to cladofulvin. The chain is Atrochrysone carboxylic acid synthase from Passalora fulva (Tomato leaf mold).